Consider the following 152-residue polypeptide: UPF0266 membrane protein YobD (152 aa).

Transmembrane regions (helical) follow at residues 6–26 (LVLI…QFIM), 45–65 (VDSV…VTSH), and 67–87 (AQMT…IFWI).

Belongs to the UPF0266 family.

It is found in the cell inner membrane. The polypeptide is UPF0266 membrane protein YobD (Salmonella agona (strain SL483)).